The sequence spans 556 residues: MKTDIEIAQSIELKPIVDVVEKLGISYDDLELYGKYKAKLSFDKIRAVESNPVGKLILVTAINPTPAGEGKSTLTIGLADALNKIGKKTMIAIREPSLGPVMGIKGGAAGGGYAQVLPMEDINLHFTGDMHAITTANNALSALIDNHLHQGNELEIDQRRILWKRVVDLNDRALRHVTVGLGGPLNGIPREDGFDITVASEIMAILCLATDIEDLKRRLANIVIGYRYDRTPVSVGDLQVEGALALILKDAIKPNLVQTIYGTPAFVHGGPFANIAHGCNSVLATTTALHLADYTVTEAGFGADLGAEKFLDIKTPNLPTSPDAVVIVATLRALKMNGGVAKDALTEENVEAVRAGFANLKRHVENIRKFGIPAVVAINEFVSDTEAEIAVLKELCASIDVPVELASVWADGAEGGVALAETVVKTIAENPANYKRLYDNDLSVQEKIEKIVNEIYRGSKVNFEKKSQTQIAQIVQNGWDKLPICMAKTQYSFSDNPNALGAPENFEITIRELVPKLGAGFIVALTGDVMTMPGLPKRPAALNMDVESDGTVLGLF.

Residue 65-72 (TPAGEGKS) coordinates ATP.

It belongs to the formate--tetrahydrofolate ligase family.

The catalysed reaction is (6S)-5,6,7,8-tetrahydrofolate + formate + ATP = (6R)-10-formyltetrahydrofolate + ADP + phosphate. It functions in the pathway one-carbon metabolism; tetrahydrofolate interconversion. The chain is Formate--tetrahydrofolate ligase from Streptococcus pneumoniae (strain Hungary19A-6).